Here is a 298-residue protein sequence, read N- to C-terminus: Mimecan (298 aa).

The N-terminal stretch at 1 to 20 (MKTLQSTLLLLLLVPLIKPA) is a signal peptide. O-linked (GalNAc...) threonine glycosylation occurs at Thr-80. A glycan (N-linked (GlcNAc...) (keratan sulfate) asparagine) is linked at Asn-88. LRR repeat units follow at residues 112 to 131 (DAVPPLPKESAYLYARFNKI), 132 to 155 (KKLTAKDFADIPNLRRLDFTGNLI), 156 to 179 (EDIEDGTFSKLSLLEELSLAENQL), 180 to 199 (LKLPVLPPKLTLFNAKYNKI), 200 to 225 (KSRGIKANAFKKLNNLTFLYLDHNAL), 226 to 246 (ESVPLNLPESLRVIHLQFNNI), and 247 to 277 (ASITDDTFCKANDTSYIRDRIEEIRLEGNPI). N-linked (GlcNAc...) (keratan sulfate) asparagine glycosylation is present at Asn-214. Cys-255 and Cys-288 form a disulfide bridge. Asn-258 carries N-linked (GlcNAc...) (keratan sulfate) asparagine glycosylation.

It belongs to the small leucine-rich proteoglycan (SLRP) family. SLRP class III subfamily. O-glycosylated with a core 1 or possibly core 8 glycan. Post-translationally, contains keratan sulfate. Bone.

The protein localises to the secreted. It localises to the extracellular space. The protein resides in the extracellular matrix. In terms of biological role, induces bone formation in conjunction with TGF-beta-1 or TGF-beta-2. This chain is Mimecan (OGN), found in Homo sapiens (Human).